A 139-amino-acid chain; its full sequence is NADPH-dependent 7-cyano-7-deazaguanine reductase (139 aa).

C34 acts as the Thioimide intermediate in catalysis. D41 (proton donor) is an active-site residue. Substrate contacts are provided by residues I56–L58 and H75–E76.

The protein belongs to the GTP cyclohydrolase I family. QueF type 1 subfamily.

The protein localises to the cytoplasm. The catalysed reaction is 7-aminomethyl-7-carbaguanine + 2 NADP(+) = 7-cyano-7-deazaguanine + 2 NADPH + 3 H(+). It participates in tRNA modification; tRNA-queuosine biosynthesis. Catalyzes the NADPH-dependent reduction of 7-cyano-7-deazaguanine (preQ0) to 7-aminomethyl-7-deazaguanine (preQ1). The polypeptide is NADPH-dependent 7-cyano-7-deazaguanine reductase (Nitrosomonas eutropha (strain DSM 101675 / C91 / Nm57)).